A 1057-amino-acid polypeptide reads, in one-letter code: Carbamoyl phosphate synthase large chain (1057 aa).

The interval 1–401 (MPKRNDIKTI…SLLKAIRSLE (401 aa)) is carboxyphosphate synthetic domain. Residues Arg-129, Arg-169, Gly-175, Gly-176, Lys-208, Ile-210, Glu-215, Gly-241, Ile-242, His-243, Gln-284, and Glu-298 each coordinate ATP. The ATP-grasp 1 domain maps to 133–327 (RNLMNELNEP…IAKLAAKIAV (195 aa)). Gln-284, Glu-298, and Asn-300 together coordinate Mg(2+). 3 residues coordinate Mn(2+): Gln-284, Glu-298, and Asn-300. Positions 402–546 (YGVHHLGLPN…YGTYETENES (145 aa)) are oligomerization domain. The carbamoyl phosphate synthetic domain stretch occupies residues 547–929 (IRSDKKKVVV…ALYKGLVASG (383 aa)). The ATP-grasp 2 domain maps to 671–861 (EALMQRIEIP…MANLAMKAIL (191 aa)). ATP-binding residues include Arg-707, Arg-746, Leu-748, Glu-752, Gly-777, Val-778, His-779, Ser-780, Gln-820, and Glu-832. Mg(2+)-binding residues include Gln-820, Glu-832, and Asn-834. Mn(2+) is bound by residues Gln-820, Glu-832, and Asn-834. The MGS-like domain maps to 930–1057 (LQVKDHGTVL…ESMTFNMNQM (128 aa)). The allosteric domain stretch occupies residues 930–1057 (LQVKDHGTVL…ESMTFNMNQM (128 aa)).

Belongs to the CarB family. Composed of two chains; the small (or glutamine) chain promotes the hydrolysis of glutamine to ammonia, which is used by the large (or ammonia) chain to synthesize carbamoyl phosphate. Tetramer of heterodimers (alpha,beta)4. Mg(2+) serves as cofactor. Mn(2+) is required as a cofactor.

The enzyme catalyses hydrogencarbonate + L-glutamine + 2 ATP + H2O = carbamoyl phosphate + L-glutamate + 2 ADP + phosphate + 2 H(+). It carries out the reaction hydrogencarbonate + NH4(+) + 2 ATP = carbamoyl phosphate + 2 ADP + phosphate + 2 H(+). It functions in the pathway amino-acid biosynthesis; L-arginine biosynthesis; carbamoyl phosphate from bicarbonate: step 1/1. It participates in pyrimidine metabolism; UMP biosynthesis via de novo pathway; (S)-dihydroorotate from bicarbonate: step 1/3. Functionally, large subunit of the glutamine-dependent carbamoyl phosphate synthetase (CPSase). CPSase catalyzes the formation of carbamoyl phosphate from the ammonia moiety of glutamine, carbonate, and phosphate donated by ATP, constituting the first step of 2 biosynthetic pathways, one leading to arginine and/or urea and the other to pyrimidine nucleotides. The large subunit (synthetase) binds the substrates ammonia (free or transferred from glutamine from the small subunit), hydrogencarbonate and ATP and carries out an ATP-coupled ligase reaction, activating hydrogencarbonate by forming carboxy phosphate which reacts with ammonia to form carbamoyl phosphate. The polypeptide is Carbamoyl phosphate synthase large chain (Macrococcus caseolyticus (strain JCSC5402) (Macrococcoides caseolyticum)).